The chain runs to 352 residues: Protein RecA (352 aa).

Position 67 to 74 (67 to 74 (GPESSGKT)) interacts with ATP.

Belongs to the RecA family.

The protein localises to the cytoplasm. Can catalyze the hydrolysis of ATP in the presence of single-stranded DNA, the ATP-dependent uptake of single-stranded DNA by duplex DNA, and the ATP-dependent hybridization of homologous single-stranded DNAs. It interacts with LexA causing its activation and leading to its autocatalytic cleavage. This chain is Protein RecA, found in Aggregatibacter actinomycetemcomitans (Actinobacillus actinomycetemcomitans).